We begin with the raw amino-acid sequence, 377 residues long: MMEFTIKRDYFINQLNDTLKAISPRTTLPILTGIKIDAKENEVILTGSDSEISIEITIPKQVDGEEIVEITETGSVVLPGRFFVDIIKKLPGKEVKLSTNEQFQTLITSGHSEFNLSGLDPDQYPLLPEVSRDDAIQLSVKVLKNIIAQTNFAVSTSETRPVLTGVNWLIQDNELICTATDSHRLAVRKLQLEDESENKNVIIPGKALSELNKIMSDSDEDIDIFFASNQVLFRVGNINFISRLLEGHYPDTTRLFPENYEIKLGINNGDFYHAIDRASLLAREGGNNVIKLSTGNELVELSSTSPEIGTVKEEVNANDVEGGNLKISFNSKYMMDALKAIDNDEVEVEFFGTMKPFILKPKDDDSVTQLILPIRTY.

It belongs to the beta sliding clamp family. In terms of assembly, forms a ring-shaped head-to-tail homodimer around DNA which binds and tethers DNA polymerases and other proteins to the DNA. The DNA replisome complex has a single clamp-loading complex (3 tau and 1 each of delta, delta', psi and chi subunits) which binds 3 Pol III cores (1 core on the leading strand and 2 on the lagging strand) each with a beta sliding clamp dimer. Additional proteins in the replisome are other copies of gamma, psi and chi, Ssb, DNA helicase and RNA primase.

It is found in the cytoplasm. Functionally, confers DNA tethering and processivity to DNA polymerases and other proteins. Acts as a clamp, forming a ring around DNA (a reaction catalyzed by the clamp-loading complex) which diffuses in an ATP-independent manner freely and bidirectionally along dsDNA. Initially characterized for its ability to contact the catalytic subunit of DNA polymerase III (Pol III), a complex, multichain enzyme responsible for most of the replicative synthesis in bacteria; Pol III exhibits 3'-5' exonuclease proofreading activity. The beta chain is required for initiation of replication as well as for processivity of DNA replication. The polypeptide is Beta sliding clamp (dnaN) (Staphylococcus epidermidis (strain ATCC 35984 / DSM 28319 / BCRC 17069 / CCUG 31568 / BM 3577 / RP62A)).